The primary structure comprises 301 residues: Fluoroquinolones export ATP-binding protein MT2762 (301 aa).

The ABC transporter domain occupies isoleucine 18 to tyrosine 246. Glycine 52–serine 59 serves as a coordination point for ATP.

It belongs to the ABC transporter superfamily. As to quaternary structure, the complex is composed of 2 ATP-binding proteins and 2 transmembrane proteins.

Its subcellular location is the cell membrane. Its function is as follows. Part of the ABC transporter complex involved in fluoroquinolones export. Probably responsible for energy coupling to the transport system. This is Fluoroquinolones export ATP-binding protein MT2762 from Mycobacterium tuberculosis (strain CDC 1551 / Oshkosh).